A 52-amino-acid chain; its full sequence is Lantibiotic epidermin (52 aa).

Positions 1-30 are excised as a propeptide; the sequence is MEAVKEKNDLFNLDVKVNAKESNDSGAEPR. The segment at residues 33–37 is a cross-link (lanthionine (Ser-Cys)); sequence SKFIC. Positions 38-41 form a cross-link, beta-methyllanthionine (Thr-Cys); the sequence is TPGC. Thr-44 is modified ((Z)-2,3-didehydrobutyrine). A cross-link (lanthionine (Ser-Cys)) is located at residues 46–51; the sequence is SFNSYC. Positions 49–52 form a cross-link, S-(2-aminovinyl)-D-cysteine (Ser-Cys); that stretch reads SYCC.

This sequence belongs to the type A lantibiotic family. Maturation of lantibiotics involves the enzymatic conversion of Thr, and Ser into dehydrated AA and the formation of thioether bonds with cysteine. The C-terminal lanthionine undergoes decarboxylation. This is followed by membrane translocation and cleavage of the modified precursor. In terms of processing, the 2,3-didehydrobutyrine is determined to be the Z-isomer.

Functionally, lanthionine-containing peptide antibiotic (lantibiotic) active on Gram-positive bacteria. The bactericidal activity of lantibiotics is based on depolarization of energized bacterial cytoplasmic membranes, initiated by the formation of aqueous transmembrane pores. This chain is Lantibiotic epidermin (epiA), found in Staphylococcus epidermidis.